A 423-amino-acid chain; its full sequence is Pleckstrin homology domain-containing family O member 1 (423 aa).

3 disordered regions span residues 1-21 (MEKN…SAQP), 81-100 (RKSK…AHSR), and 217-277 (LAAG…HSEK). The segment covering 7-20 (AKRGQQDGNQQSAQ) has biased composition (polar residues). A PH domain is found at 20-131 (QPEKVGWVRK…WINALNSAIT (112 aa)). The span at 83–92 (SKSRSKKNHS) shows a compositional bias: basic residues. Positions 222 to 259 (RRSDSENVKLSEKGRSGTLPRHEVTSWDKPTQRKDSLD) are enriched in basic and acidic residues.

Post-translationally, C-terminal fragments could be released during apoptosis via caspase-3-dependent cleavage.

It localises to the membrane. It is found in the nucleus. The protein resides in the cytoplasm. Its function is as follows. Plays a role in the regulation of the actin cytoskeleton through its interactions with actin capping protein (CP). The chain is Pleckstrin homology domain-containing family O member 1 (PLEKHO1) from Gallus gallus (Chicken).